The primary structure comprises 142 residues: MRNYDLSPLLRQWIGFDKLASSMGGQEPQGFPPYNIEKSDDNHYRISLALAGFKQSELDIEVEGPRLTVRGKPTPSEKQVEYLHQGLVCKEFALTFTLAEHLQVSEAQFENGLLHIDLVRQVPEALQPQRIAIGTTPGLEAK.

One can recognise a sHSP domain in the interval 25-136; sequence GQEPQGFPPY…QPQRIAIGTT (112 aa).

It belongs to the small heat shock protein (HSP20) family. In terms of assembly, homodimer. Forms homomultimers of about 100-150 subunits at optimal growth temperatures. Conformation changes to oligomers at high temperatures or high ionic concentrations. The decrease in size of the multimers is accompanied by an increase in chaperone activity.

Its subcellular location is the cytoplasm. Its function is as follows. Associates with aggregated proteins, together with IbpA, to stabilize and protect them from irreversible denaturation and extensive proteolysis during heat shock and oxidative stress. Aggregated proteins bound to the IbpAB complex are more efficiently refolded and reactivated by the ATP-dependent chaperone systems ClpB and DnaK/DnaJ/GrpE. Its activity is ATP-independent. The polypeptide is Small heat shock protein IbpB (Serratia proteamaculans (strain 568)).